A 426-amino-acid polypeptide reads, in one-letter code: MFSPGTTVEVSSKINNKEVVWVPAVVIKEFKEDDEYKYIVRVYDKSFSCKGNKAARLNKTVDLCSLRPTPPSISVEEYQLKEYVEVFHDGMGWRQGRVMKIQERVMLSQGRVMVSQGRVMGNLSQKCYIVLLEATKKQISFKQSDLRPLQVWEDGVWKMLQTRESSLTQGSGDETSDSVRNANESDPPVTPRPGITTPPLKQIEAETQRKTLPRNQNASVNDSTRENENSEDINRKRKREESLCSDASVEDTTMTLPFEKKLSIWKTLESVETVPQSPHFSPLVETREDCREMSAVGMMLTFPCLLEEVKSLQHDNSISSLISLSNNFCELEKHGFNVKAPQSRISKLLSLRGKQSMKMDELKGAEKVTAEKESIKIENERKILELQRLNEEVDKEIAQSKSCAAKIVQQLEDVELQFQTTASAPW.

Polar residues-rich tracts occupy residues 164 to 184 (ESSL…NANE) and 213 to 222 (PRNQNASVND). The disordered stretch occupies residues 164–248 (ESSLTQGSGD…REESLCSDAS (85 aa)). Over residues 223–242 (STRENENSEDINRKRKREES) the composition is skewed to basic and acidic residues. Residues 256–425 (LPFEKKLSIW…LQFQTTASAP (170 aa)) enclose the DUF724 domain. A coiled-coil region spans residues 370-402 (AEKESIKIENERKILELQRLNEEVDKEIAQSKS).

Expressed in flowers.

The protein localises to the nucleus. In terms of biological role, may be involved in the polar growth of plant cells via transportation of RNAs. The sequence is that of DUF724 domain-containing protein 9 from Arabidopsis thaliana (Mouse-ear cress).